Consider the following 605-residue polypeptide: Probable potassium transport system protein Kup 1 (605 aa).

The next 12 membrane-spanning stretches (helical) occupy residues 16–36 (ALGL…TVIF), 46–66 (VFGI…MEYA), 97–117 (VAFA…DGVI), 138–158 (GLST…LFSV), 166–186 (VAGA…VTGV), 212–232 (GLAG…GEAL), 248–268 (WYFV…FAIT), 287–307 (LYIP…QSII), 339–359 (IYLG…MLLF), 368–388 (AYGM…IIVF), 397–417 (ALVA…TFSK), and 418–438 (IPHG…TIII).

This sequence belongs to the HAK/KUP transporter (TC 2.A.72) family.

The protein resides in the cell inner membrane. It carries out the reaction K(+)(in) + H(+)(in) = K(+)(out) + H(+)(out). Transport of potassium into the cell. Likely operates as a K(+):H(+) symporter. The sequence is that of Probable potassium transport system protein Kup 1 from Geobacter metallireducens (strain ATCC 53774 / DSM 7210 / GS-15).